We begin with the raw amino-acid sequence, 446 residues long: 4-aminobutyrate aminotransferase (446 aa).

The residue at position 291 (K291) is an N6-(pyridoxal phosphate)lysine.

Belongs to the class-III pyridoxal-phosphate-dependent aminotransferase family. The cofactor is pyridoxal 5'-phosphate.

The catalysed reaction is 4-aminobutanoate + 2-oxoglutarate = succinate semialdehyde + L-glutamate. It catalyses the reaction (S)-3-amino-2-methylpropanoate + 2-oxoglutarate = 2-methyl-3-oxopropanoate + L-glutamate. The protein operates within amino-acid degradation; 4-aminobutanoate degradation. The polypeptide is 4-aminobutyrate aminotransferase (gabT) (Mycobacterium leprae (strain TN)).